The chain runs to 421 residues: ATP-dependent RNA helicase eIF4A (421 aa).

The disordered stretch occupies residues M1–G26. The span at D13–G26 shows a compositional bias: polar residues. A Q motif motif is present at residues D48–Q76. One can recognise a Helicase ATP-binding domain in the interval I79–I249. A92–T99 lines the ATP pocket. Positions D197–D200 match the DEAD box motif. A Helicase C-terminal domain is found at G260 to I421.

The protein belongs to the DEAD box helicase family. eIF4A subfamily. Component of the eIF4F complex, which composition varies with external and internal environmental conditions. It is composed of at least eIF4A, eIF4E and eIF4G.

Its subcellular location is the cytoplasm. It carries out the reaction ATP + H2O = ADP + phosphate + H(+). ATP-dependent RNA helicase which is a subunit of the eIF4F complex involved in cap recognition and is required for mRNA binding to ribosome. In the current model of translation initiation, eIF4A unwinds RNA secondary structures in the 5'-UTR of mRNAs which is necessary to allow efficient binding of the small ribosomal subunit, and subsequent scanning for the initiator codon. This Aspergillus oryzae (strain ATCC 42149 / RIB 40) (Yellow koji mold) protein is ATP-dependent RNA helicase eIF4A (tif1).